The sequence spans 558 residues: Phosphatidylserine lipase ABHD16A (558 aa).

2 helical membrane-spanning segments follow: residues 60-80 (ILAL…FAFF) and 93-113 (VVPF…VACL). The Cytoplasmic portion of the chain corresponds to 114–558 (RGIGRWTNPQ…AQNFQMPWHL (445 aa)). An AB hydrolase-1 domain is found at 281-407 (LVICCEGNAG…LVTRTVRQHL (127 aa)). Residues Ser-355, Asp-430, and His-507 each act as charge relay system in the active site.

This sequence belongs to the AB hydrolase superfamily. ABHD16 family.

Its subcellular location is the membrane. It catalyses the reaction 1-heptadecanoyl-2-(5Z,8Z,11Z,14Z-eicosatetraenoyl)-sn-glycero-3-phosphoserine + H2O = 1-heptadecanoyl-sn-glycero-3-phosphoserine + (5Z,8Z,11Z,14Z)-eicosatetraenoate + H(+). The enzyme catalyses 1-hexadecanoyl-2-(9Z-octadecenoyl)-sn-glycero-3-phospho-L-serine + H2O = 1-hexadecanoyl-sn-glycero-3-phospho-L-serine + (9Z)-octadecenoate + H(+). The catalysed reaction is 1-octadecanoyl-2-(9Z,12Z-octadecadienoyl)-sn-glycero-3-phosphoserine + H2O = 1-octadecanoyl-sn-glycero-3-phosphoserine + (9Z,12Z)-octadecadienoate + H(+). It carries out the reaction 1-heptadecanoyl-2-(5Z,8Z,11Z,14Z-eicosatetraenoyl)-sn-glycero-3-phosphocholine + H2O = 1-heptadecanoyl-sn-glycero-3-phosphocholine + (5Z,8Z,11Z,14Z)-eicosatetraenoate + H(+). It catalyses the reaction 1-hexadecanoyl-2-(9Z-octadecenoyl)-sn-glycero-3-phosphoglycerol + H2O = 1-hexadecanoyl-sn-glycero-3-phosphoglycerol + (9Z)-octadecenoate + H(+). The enzyme catalyses 1-hexadecanoyl-2-(9Z-octadecenoyl)-sn-glycero-3-phospho-(1D-myo-inositol) + H2O = 1-hexadecanoyl-sn-glycero-3-phospho-(1D-myo-inositol) + (9Z)-octadecenoate + H(+). The catalysed reaction is 1-heptadecanoyl-2-(5Z,8Z,11Z,14Z-eicosatetraenoyl)-sn-glycero-3-phosphoethanolamine + H2O = 1-heptadecanoyl-sn-glycero-3-phosphoethanolamine + (5Z,8Z,11Z,14Z)-eicosatetraenoate + H(+). It carries out the reaction 1-hexadecanoyl-2-(9Z-octadecenoyl)-sn-glycero-3-phospho-(1'-sn-glycerol) + H2O = 1-hexadecanoyl-sn-glycero-3-phospho-(1'-sn-glycerol) + (9Z)-octadecenoate + H(+). It catalyses the reaction Hydrolyzes glycerol monoesters of long-chain fatty acids.. The enzyme catalyses 1-tetradecanoylglycerol + H2O = tetradecanoate + glycerol + H(+). The catalysed reaction is 2-hexadecanoylglycerol + H2O = glycerol + hexadecanoate + H(+). It carries out the reaction 1-(9Z-octadecenoyl)-glycerol + H2O = glycerol + (9Z)-octadecenoate + H(+). It catalyses the reaction 2-(9Z-octadecenoyl)-glycerol + H2O = glycerol + (9Z)-octadecenoate + H(+). The enzyme catalyses 2-(9Z,12Z-octadecadienoyl)-glycerol + H2O = (9Z,12Z)-octadecadienoate + glycerol + H(+). The catalysed reaction is 1-(5Z,8Z,11Z,14Z-eicosatetraenoyl)-glycerol + H2O = glycerol + (5Z,8Z,11Z,14Z)-eicosatetraenoate + H(+). It carries out the reaction 2-(5Z,8Z,11Z,14Z-eicosatetraenoyl)-glycerol + H2O = glycerol + (5Z,8Z,11Z,14Z)-eicosatetraenoate + H(+). It catalyses the reaction prostaglandin D2-1-glycerol ester + H2O = prostaglandin D2 + glycerol + H(+). The enzyme catalyses 2-glyceryl-15-deoxy-Delta(12,14)-prostaglandin J2 + H2O = 15-deoxy-Delta(12,14)-prostaglandin J2 + glycerol + H(+). The catalysed reaction is 1-(9Z,12Z-octadecadienoyl)-glycerol + H2O = (9Z,12Z)-octadecadienoate + glycerol + H(+). In terms of biological role, phosphatidylserine (PS) lipase that mediates the hydrolysis of phosphatidylserine to generate lysophosphatidylserine (LPS). LPS constitutes a class of signaling lipids that regulates immunological and neurological processes. Has no activity towards diacylglycerol, triacylglycerol or lysophosphatidylserine lipase. Also has monoacylglycerol lipase activity, with preference for 1-(9Z,12Z-octadecadienoyl)-glycerol (1-LG) and 2-glyceryl-15-deoxy-Delta(12,14)-prostaglandin J2 (15d-PGJ(2)-G). This Bos taurus (Bovine) protein is Phosphatidylserine lipase ABHD16A.